A 156-amino-acid chain; its full sequence is Small ribosomal subunit protein uS7 (156 aa).

The protein belongs to the universal ribosomal protein uS7 family. As to quaternary structure, part of the 30S ribosomal subunit. Contacts proteins S9 and S11.

One of the primary rRNA binding proteins, it binds directly to 16S rRNA where it nucleates assembly of the head domain of the 30S subunit. Is located at the subunit interface close to the decoding center, probably blocks exit of the E-site tRNA. The protein is Small ribosomal subunit protein uS7 of Chlorobaculum tepidum (strain ATCC 49652 / DSM 12025 / NBRC 103806 / TLS) (Chlorobium tepidum).